The chain runs to 309 residues: Malate dehydrogenase (309 aa).

NAD(+) contacts are provided by residues 9–14 (GAGFVG) and Asp33. 2 residues coordinate substrate: Arg82 and Arg88. NAD(+)-binding positions include Asn95 and 118–120 (VNN). Residues Asn120 and Arg151 each coordinate substrate. His175 acts as the Proton acceptor in catalysis.

The protein belongs to the LDH/MDH superfamily. MDH type 3 family.

It catalyses the reaction (S)-malate + NAD(+) = oxaloacetate + NADH + H(+). In terms of biological role, catalyzes the reversible oxidation of malate to oxaloacetate. This is Malate dehydrogenase from Chloroflexus aurantiacus (strain ATCC 29364 / DSM 637 / Y-400-fl).